Here is a 421-residue protein sequence, read N- to C-terminus: MDMIEINGGNRLTGEVKVSGAKNAVLPVLTASLLASEGVSKLMNVPALSDVETINNVISTLNAEVSYDKDEESVTVDATKELNEEAPYEYVSKMRASILVMGPLLARLGHAKVALPGGCAIGSRPIEQHIKGFEELGADIHMDGGFIYASTENGLKGTTIHLDFPSVGATQNIIMAASLAEGKTVLENVAREPEIVDLANYINEMGGNVSGAGTDTIIIHGVETLHGVEHAIIPDRIEAGTLLIAGAITRGDVLVNGAIKEHMTSLVYKLEEMGVNLDYQDDAIRVRVEDELKPVDIKTLPHPGFPTDMQSQMMALLLTAEGHKVVTETVFENRFMHVAEFKRMNAKISVEGRSAKIEGKSELQGAQVKATDLRAAAALILAGLVADGTTQVTELKHLDRGYVDLHGKLEALGADIKRTQA.

Position 22–23 (22–23 (KN)) interacts with phosphoenolpyruvate. Residue Arg95 coordinates UDP-N-acetyl-alpha-D-glucosamine. The active-site Proton donor is the Cys119. A 2-(S-cysteinyl)pyruvic acid O-phosphothioketal modification is found at Cys119. UDP-N-acetyl-alpha-D-glucosamine-binding positions include 124–128 (RPIEQ), Asp308, and Val330.

The protein belongs to the EPSP synthase family. MurA subfamily.

Its subcellular location is the cytoplasm. It carries out the reaction phosphoenolpyruvate + UDP-N-acetyl-alpha-D-glucosamine = UDP-N-acetyl-3-O-(1-carboxyvinyl)-alpha-D-glucosamine + phosphate. It functions in the pathway cell wall biogenesis; peptidoglycan biosynthesis. Cell wall formation. Adds enolpyruvyl to UDP-N-acetylglucosamine. In Staphylococcus saprophyticus subsp. saprophyticus (strain ATCC 15305 / DSM 20229 / NCIMB 8711 / NCTC 7292 / S-41), this protein is UDP-N-acetylglucosamine 1-carboxyvinyltransferase 2.